The following is a 414-amino-acid chain: Arrestin domain-containing protein 3 (414 aa).

2 short sequence motifs (PPxY motif) span residues 346–349 (PPSY) and 391–394 (PPLY). The interval 393-414 (LYSEIDPNPDQSADDRPSCPSR) is disordered. The segment covering 405–414 (ADDRPSCPSR) has biased composition (basic and acidic residues).

Belongs to the arrestin family. Interacts (via PPxY motifs) with NEDD4 (via WW domains). Interacts with ADRB2. Interacts with ADRB3. Interacts with HGS (via PPxY motifs). Does not bind TXN (thioredoxin). Interacts with ITCH.

The protein resides in the cytoplasm. The protein localises to the cell membrane. It is found in the lysosome. It localises to the endosome. Its subcellular location is the early endosome. In terms of biological role, adapter protein that plays a role in regulating cell-surface expression of adrenergic receptors and probably also other G protein-coupled receptors. Plays a role in NEDD4-mediated ubiquitination and endocytosis af activated ADRB2 and subsequent ADRB2 degradation. May recruit NEDD4 to ADRB2. Alternatively, may function as adapter protein that does not play a major role in recruiting NEDD4 to ADRB2, but rather plays a role in a targeting ADRB2 to endosomes. This chain is Arrestin domain-containing protein 3 (ARRDC3), found in Pongo abelii (Sumatran orangutan).